The following is a 240-amino-acid chain: Biosynthetic peptidoglycan transglycosylase (240 aa).

Residues 15 to 35 traverse the membrane as a helical segment; the sequence is WMVYLGAVVAIAWLATQAFYF.

The protein belongs to the glycosyltransferase 51 family.

It localises to the cell inner membrane. It carries out the reaction [GlcNAc-(1-&gt;4)-Mur2Ac(oyl-L-Ala-gamma-D-Glu-L-Lys-D-Ala-D-Ala)](n)-di-trans,octa-cis-undecaprenyl diphosphate + beta-D-GlcNAc-(1-&gt;4)-Mur2Ac(oyl-L-Ala-gamma-D-Glu-L-Lys-D-Ala-D-Ala)-di-trans,octa-cis-undecaprenyl diphosphate = [GlcNAc-(1-&gt;4)-Mur2Ac(oyl-L-Ala-gamma-D-Glu-L-Lys-D-Ala-D-Ala)](n+1)-di-trans,octa-cis-undecaprenyl diphosphate + di-trans,octa-cis-undecaprenyl diphosphate + H(+). The protein operates within cell wall biogenesis; peptidoglycan biosynthesis. Its function is as follows. Peptidoglycan polymerase that catalyzes glycan chain elongation from lipid-linked precursors. The chain is Biosynthetic peptidoglycan transglycosylase from Paraburkholderia phytofirmans (strain DSM 17436 / LMG 22146 / PsJN) (Burkholderia phytofirmans).